Reading from the N-terminus, the 480-residue chain is Mannose-1-phosphate guanylyltransferase ManC (480 aa).

The protein belongs to the mannose-6-phosphate isomerase type 2 family.

It carries out the reaction alpha-D-mannose 1-phosphate + GTP + H(+) = GDP-alpha-D-mannose + diphosphate. The protein operates within nucleotide-sugar biosynthesis; GDP-alpha-D-mannose biosynthesis; GDP-alpha-D-mannose from alpha-D-mannose 1-phosphate (GTP route): step 1/1. Its function is as follows. Involved in the biosynthesis of the capsular polysaccharide colanic acid. The sequence is that of Mannose-1-phosphate guanylyltransferase ManC (manC) from Salmonella typhimurium (strain LT2 / SGSC1412 / ATCC 700720).